The chain runs to 108 residues: UPF0145 protein Acel_2109 (108 aa).

Belongs to the UPF0145 family.

The protein is UPF0145 protein Acel_2109 of Acidothermus cellulolyticus (strain ATCC 43068 / DSM 8971 / 11B).